We begin with the raw amino-acid sequence, 53 residues long: Cytochrome c oxidase subunit 7e (53 aa).

In terms of assembly, slime mold cytochrome c oxidase consists of at least seven different polypeptides species, subunits I, II, III, IV, V, VI, and VIIe/s in order of MW.

The protein localises to the mitochondrion inner membrane. It carries out the reaction 4 Fe(II)-[cytochrome c] + O2 + 8 H(+)(in) = 4 Fe(III)-[cytochrome c] + 2 H2O + 4 H(+)(out). Its function is as follows. This protein is one of the nuclear-coded polypeptide chains of cytochrome c oxidase, the terminal oxidase in mitochondrial electron transport. The chain is Cytochrome c oxidase subunit 7e (cxgE) from Dictyostelium discoideum (Social amoeba).